The following is a 96-amino-acid chain: Sec-independent protein translocase protein TatA (96 aa).

A helical transmembrane segment spans residues 1 to 21; the sequence is MGFSSIWHWIIVLVVVLLLFG. A disordered region spans residues 42–96; the sequence is GMADDEDDEAASVSAERRGIEDGKPAQTIYPPQQPQQPQQPPQQPPVHRDDAPRG. Positions 56–65 are enriched in basic and acidic residues; that stretch reads AERRGIEDGK. A compositionally biased stretch (pro residues) spans 73–86; sequence PQQPQQPQQPPQQP.

The protein belongs to the TatA/E family. As to quaternary structure, the Tat system comprises two distinct complexes: a TatABC complex, containing multiple copies of TatA, TatB and TatC subunits, and a separate TatA complex, containing only TatA subunits. Substrates initially bind to the TatABC complex, which probably triggers association of the separate TatA complex to form the active translocon.

The protein resides in the cell inner membrane. In terms of biological role, part of the twin-arginine translocation (Tat) system that transports large folded proteins containing a characteristic twin-arginine motif in their signal peptide across membranes. TatA could form the protein-conducting channel of the Tat system. This Rhodospirillum rubrum (strain ATCC 11170 / ATH 1.1.1 / DSM 467 / LMG 4362 / NCIMB 8255 / S1) protein is Sec-independent protein translocase protein TatA.